Consider the following 1002-residue polypeptide: DNA-directed RNA polymerase 1, mitochondrial (1002 aa).

Residues 1–21 constitute a mitochondrion transit peptide; it reads MWRYISKQAYSRKFRNSHDSA. Residues aspartate 703, lysine 778, and aspartate 935 contribute to the active site.

Belongs to the phage and mitochondrial RNA polymerase family. In terms of tissue distribution, the highest levels of expression are detected in the mature leaves. The level of expression is lowest in the cotyledons.

It localises to the mitochondrion. The catalysed reaction is RNA(n) + a ribonucleoside 5'-triphosphate = RNA(n+1) + diphosphate. In terms of biological role, DNA-dependent RNA polymerase catalyzes the transcription of DNA into RNA using the four ribonucleoside triphosphates as substrates. This Nicotiana sylvestris (Wood tobacco) protein is DNA-directed RNA polymerase 1, mitochondrial (RPOT1).